The primary structure comprises 179 residues: Replication restart protein DnaT (179 aa).

The interval 1–83 (MSSRILTSHF…FEEPAAAPVA (83 aa)) is required for trimerization and to bind PriB. Positions 84-179 (VPMGKFAMYA…DSHIPRGFRG (96 aa)) are binds ssDNA. The interval 151 to 179 (SRASNGGQPKRDVNSVSEPDSHIPRGFRG) is disordered. Positions 159 to 173 (PKRDVNSVSEPDSHI) are enriched in basic and acidic residues.

Belongs to the DnaT family. Homotrimer. Interacts with PriB. Interacts with PriC. Component of the replication restart primosome. Primosome assembly occurs via a 'hand-off' mechanism. PriA binds to replication forks, subsequently PriB then DnaT bind; DnaT then displaces ssDNA to generate the helicase loading substrate.

Its function is as follows. Involved in the restart of stalled replication forks, which reloads the replicative helicase on sites other than the origin of replication. Can function in multiple replication restart pathways. Displaces ssDNA from a PriB-ssDNA complex. Probably forms a spiral filament on ssDNA. Functionally, binds single-stranded (ss)DNA. The minimal binding site is about 26 +/- 2 nucleotides (nt) per trimer. Two DNA-protein complexes are seen with 55 nt-long ssDNA. In Klebsiella pneumoniae subsp. pneumoniae (strain ATCC 700721 / MGH 78578), this protein is Replication restart protein DnaT.